We begin with the raw amino-acid sequence, 876 residues long: Alanine--tRNA ligase (876 aa).

Zn(2+)-binding residues include H568, H572, C670, and H674.

The protein belongs to the class-II aminoacyl-tRNA synthetase family. Requires Zn(2+) as cofactor.

Its subcellular location is the cytoplasm. It carries out the reaction tRNA(Ala) + L-alanine + ATP = L-alanyl-tRNA(Ala) + AMP + diphosphate. Catalyzes the attachment of alanine to tRNA(Ala) in a two-step reaction: alanine is first activated by ATP to form Ala-AMP and then transferred to the acceptor end of tRNA(Ala). Also edits incorrectly charged Ser-tRNA(Ala) and Gly-tRNA(Ala) via its editing domain. This chain is Alanine--tRNA ligase, found in Geobacter metallireducens (strain ATCC 53774 / DSM 7210 / GS-15).